A 125-amino-acid chain; its full sequence is Photosystem I reaction center subunit IV, chloroplastic (125 aa).

The N-terminal 34 residues, Met-1 to Arg-34, are a transit peptide targeting the chloroplast. Residues Ala-42–Ala-57 are compositionally biased toward low complexity. The disordered stretch occupies residues Ala-42–Ser-68.

This sequence belongs to the PsaE family.

The protein resides in the plastid. It localises to the chloroplast thylakoid membrane. In terms of biological role, stabilizes the interaction between PsaC and the PSI core, assists the docking of the ferredoxin to PSI and interacts with ferredoxin-NADP oxidoreductase. The polypeptide is Photosystem I reaction center subunit IV, chloroplastic (PSAE-1) (Spinacia oleracea (Spinach)).